The primary structure comprises 487 residues: Betaine aldehyde dehydrogenase (487 aa).

K(+) is bound by residues S26 and D93. 150-152 (GAW) provides a ligand contact to NAD(+). K162 (charge relay system) is an active-site residue. NAD(+)-binding positions include 176-179 (KPSE) and 229-232 (SVPT). L244 serves as a coordination point for K(+). E250 functions as the Proton acceptor in the catalytic mechanism. 3 residues coordinate NAD(+): G252, C284, and E384. C284 (nucleophile) is an active-site residue. C284 is modified (cysteine sulfenic acid (-SOH)). Residues K454 and G457 each contribute to the K(+) site. E461 (charge relay system) is an active-site residue.

This sequence belongs to the aldehyde dehydrogenase family. In terms of assembly, dimer of dimers. It depends on K(+) as a cofactor.

The catalysed reaction is betaine aldehyde + NAD(+) + H2O = glycine betaine + NADH + 2 H(+). The protein operates within amine and polyamine biosynthesis; betaine biosynthesis via choline pathway; betaine from betaine aldehyde: step 1/1. Functionally, involved in the biosynthesis of the osmoprotectant glycine betaine. Catalyzes the irreversible oxidation of betaine aldehyde to the corresponding acid. In Rhizobium johnstonii (strain DSM 114642 / LMG 32736 / 3841) (Rhizobium leguminosarum bv. viciae), this protein is Betaine aldehyde dehydrogenase.